Consider the following 336-residue polypeptide: SCP domain-containing protein 1 (336 aa).

The N-terminal stretch at 1–18 is a signal peptide; that stretch reads MEFKLLLVLCFNIGLICS. An N-linked (GlcNAc...) asparagine glycan is attached at Asn-47. Over residues 73-85 the composition is skewed to polar residues; sequence QGGNTAPSSSLPG. Residues 73 to 94 form a disordered region; the sequence is QGGNTAPSSSLPGVSSMPMPSA. The 118-residue stretch at 175–292 folds into the SCP domain; it reads LEEHNKFRSD…YCGDMSFIAC (118 aa). N-linked (GlcNAc...) asparagine glycans are attached at residues Asn-213 and Asn-257.

As to expression, component of the acid-insoluble and acid-soluble organic matrix of calcified layers of the shell (at protein level).

It localises to the secreted. This Lottia gigantea (Giant owl limpet) protein is SCP domain-containing protein 1.